A 132-amino-acid polypeptide reads, in one-letter code: Sodium/calcium exchanger regulatory protein 1 (132 aa).

Residues arginine 126 and tyrosine 128 each contribute to the (9Z)-hexadecenoate site.

The protein belongs to the calycin superfamily. Fatty-acid binding protein (FABP) family. Interacts with Na(+)/Ca(2+) exchanger NCXSQ1; ReP1-NCXSQ phosphorylation does not affect the interaction. In terms of processing, phosphorylated. Phosphorylation may result in the release of the bound fatty acid. In terms of tissue distribution, expressed in the optic nerve (at protein level).

The protein localises to the cytoplasm. The protein resides in the membrane. Functionally, binds and may transport fatty acids such as palmitoleate. Also binds poly-phosphoinositides including phosphatidylinositol 4-phosphate (PtdIns(4)P), phosphatidylinositol 4,5-bisphosphate (PtdIns(4,5)P2) and phosphatidylinositol 3,4,5-trisphosphate (PtdIns(3,4,5)P3), and phosphatidic acid. When phosphorylated, stimulates the activity of optic nerve Na(+)/Ca(2+) exchanger. This Doryteuthis pealeii (Longfin inshore squid) protein is Sodium/calcium exchanger regulatory protein 1.